We begin with the raw amino-acid sequence, 394 residues long: 8-amino-7-oxononanoate synthase (394 aa).

Residue Arg21 participates in substrate binding. A pyridoxal 5'-phosphate-binding site is contributed by 112–113 (GY). His137 lines the substrate pocket. 3 residues coordinate pyridoxal 5'-phosphate: Ser183, His211, and Thr239. N6-(pyridoxal phosphate)lysine is present on Lys242. Thr358 contacts substrate.

It belongs to the class-II pyridoxal-phosphate-dependent aminotransferase family. BioF subfamily. In terms of assembly, homodimer. Pyridoxal 5'-phosphate is required as a cofactor.

It catalyses the reaction 6-carboxyhexanoyl-[ACP] + L-alanine + H(+) = (8S)-8-amino-7-oxononanoate + holo-[ACP] + CO2. Its pathway is cofactor biosynthesis; biotin biosynthesis. Its function is as follows. Catalyzes the decarboxylative condensation of pimeloyl-[acyl-carrier protein] and L-alanine to produce 8-amino-7-oxononanoate (AON), [acyl-carrier protein], and carbon dioxide. This is 8-amino-7-oxononanoate synthase from Paraburkholderia xenovorans (strain LB400).